The sequence spans 307 residues: Urease accessory protein UreD (307 aa).

It belongs to the UreD family. As to quaternary structure, ureD, UreF and UreG form a complex that acts as a GTP-hydrolysis-dependent molecular chaperone, activating the urease apoprotein by helping to assemble the nickel containing metallocenter of UreC. The UreE protein probably delivers the nickel.

The protein resides in the cytoplasm. Functionally, required for maturation of urease via the functional incorporation of the urease nickel metallocenter. This chain is Urease accessory protein UreD, found in Prochlorococcus marinus (strain NATL2A).